The primary structure comprises 91 residues: MKTLLLTLVVVTIMCLDLGYTTKCYVTPDVTSQTCPDGQNICYTETWCDAWCGSRGKRVNLGCAATCPKVNPGVDIICCSTDNCNPFPKRS.

An N-terminal signal peptide occupies residues 1–21 (MKTLLLTLVVVTIMCLDLGYT). Disulfide bonds link cysteine 24/cysteine 42, cysteine 35/cysteine 63, cysteine 48/cysteine 52, cysteine 67/cysteine 78, and cysteine 79/cysteine 84.

Belongs to the three-finger toxin family. Long-chain subfamily. Type II alpha-neurotoxin sub-subfamily. As to expression, expressed by the venom gland.

The protein localises to the secreted. In terms of biological role, binds with high affinity to muscular (alpha-1/CHRNA1) and neuronal (alpha-7/CHRNA7) nicotinic acetylcholine receptor (nAChR) and inhibits acetylcholine from binding to the receptor, thereby impairing neuromuscular and neuronal transmission. This is Long neurotoxin OH-56 from Ophiophagus hannah (King cobra).